Here is a 116-residue protein sequence, read N- to C-terminus: NADH-ubiquinone oxidoreductase chain 3 (116 aa).

The next 3 membrane-spanning stretches (helical) occupy residues 6 to 26, 56 to 76, and 85 to 105; these read FMLL…FWLA, FFLV…LLPL, and PLLT…GLVY.

The protein belongs to the complex I subunit 3 family.

Its subcellular location is the mitochondrion membrane. The catalysed reaction is a ubiquinone + NADH + 5 H(+)(in) = a ubiquinol + NAD(+) + 4 H(+)(out). Its function is as follows. Core subunit of the mitochondrial membrane respiratory chain NADH dehydrogenase (Complex I) that is believed to belong to the minimal assembly required for catalysis. Complex I functions in the transfer of electrons from NADH to the respiratory chain. The immediate electron acceptor for the enzyme is believed to be ubiquinone. In Struthio camelus (Common ostrich), this protein is NADH-ubiquinone oxidoreductase chain 3 (MT-ND3).